A 391-amino-acid polypeptide reads, in one-letter code: Lipid-A-disaccharide synthase (391 aa).

It belongs to the LpxB family.

It catalyses the reaction a lipid X + a UDP-2-N,3-O-bis[(3R)-3-hydroxyacyl]-alpha-D-glucosamine = a lipid A disaccharide + UDP + H(+). Its pathway is bacterial outer membrane biogenesis; LPS lipid A biosynthesis. Its function is as follows. Condensation of UDP-2,3-diacylglucosamine and 2,3-diacylglucosamine-1-phosphate to form lipid A disaccharide, a precursor of lipid A, a phosphorylated glycolipid that anchors the lipopolysaccharide to the outer membrane of the cell. In Aromatoleum aromaticum (strain DSM 19018 / LMG 30748 / EbN1) (Azoarcus sp. (strain EbN1)), this protein is Lipid-A-disaccharide synthase.